Reading from the N-terminus, the 722-residue chain is Dual specificity tyrosine-phosphorylation-regulated kinase 2 (722 aa).

Serine 25 is subject to Phosphoserine. Positions threonine 54–methionine 127 are disordered. The segment covering glycine 66–glycine 119 has biased composition (low complexity). The 297-residue stretch at tyrosine 198–leucine 494 folds into the Protein kinase domain. ATP is bound by residues isoleucine 204–valine 212 and lysine 227. Residue aspartate 324 is the Proton acceptor of the active site. Residues tyrosine 356 and tyrosine 358 each carry the phosphotyrosine; by autocatalysis modification. 4 disordered regions span residues leucine 494–valine 519, threonine 557–lysine 582, glycine 624–threonine 643, and threonine 679–alanine 722. The segment covering arginine 506–valine 519 has biased composition (low complexity). The span at threonine 557–glycine 576 shows a compositional bias: polar residues. 2 stretches are compositionally biased toward low complexity: residues glycine 626–alanine 635 and glycine 689–serine 707.

This sequence belongs to the protein kinase superfamily. CMGC Ser/Thr protein kinase family. MNB/DYRK subfamily. The cofactor is Mg(2+). Post-translationally, phosphorylated on serine/threonine residues.

It localises to the cytoplasm. The catalysed reaction is L-seryl-[protein] + ATP = O-phospho-L-seryl-[protein] + ADP + H(+). It catalyses the reaction L-threonyl-[protein] + ATP = O-phospho-L-threonyl-[protein] + ADP + H(+). The enzyme catalyses L-tyrosyl-[protein] + ATP = O-phospho-L-tyrosyl-[protein] + ADP + H(+). Autophosphorylates on Tyr-356 and Tyr-358. In terms of biological role, in vitro; can phosphorylate exogenous substrates on Ser and Thr residues. May have a physiological role in development being involved in cellular growth and differentiation. In Drosophila melanogaster (Fruit fly), this protein is Dual specificity tyrosine-phosphorylation-regulated kinase 2.